The following is a 382-amino-acid chain: Gap junction alpha-1 protein (382 aa).

Over 2 to 23 (GDWSALGKLLDKVQAYSTAGGK) the chain is Cytoplasmic. Position 5 is a phosphoserine (serine 5). A helical transmembrane segment spans residues 24–44 (VWLSVLFIFRILLLGTAVESA). Topologically, residues 45 to 76 (WGDEQSAFRCNTQQPGCENVCYDKSFPISHVR) are extracellular. Intrachain disulfides connect cysteine 54–cysteine 192 and cysteine 187–cysteine 198. A helical transmembrane segment spans residues 77–97 (FWVLQIIFVSVPTLLYLAHVF). The Cytoplasmic portion of the chain corresponds to 98 to 155 (YVMRKEEKLNKKEEELKVAQTDGVNVEMHLKQIEIKKFKYGIEEHGKVKMRGGLLRTY). Lysine 144 is covalently cross-linked (Glycyl lysine isopeptide (Lys-Gly) (interchain with G-Cter in SUMO)). A helical membrane pass occupies residues 156–176 (IISILFKSVFEVAFLLIQWYI). The Extracellular segment spans residues 177–207 (YGFSLSAVYTCKRDPCPHQVDCFLSRPTEKT). Residues 208 to 228 (IFIIFMLVVSLVSLALNIIEL) form a helical membrane-spanning segment. Residues 229–382 (FYVFFKGVKD…SRPRPDDLEI (154 aa)) lie on the Cytoplasmic side of the membrane. Lysine 237 is covalently cross-linked (Glycyl lysine isopeptide (Lys-Gly) (interchain with G-Cter in SUMO)). Residues 244 to 382 (SDPYHATTGP…SRPRPDDLEI (139 aa)) form an interaction with NOV region. Tyrosine 247 carries the phosphotyrosine modification. Residues serine 255, serine 257, and serine 262 each carry the phosphoserine modification. The interval 264–382 (KYAYFNGCSS…SRPRPDDLEI (119 aa)) is interaction with UBQLN4. Cysteine 271 is subject to S-nitrosocysteine. Threonine 275 carries the post-translational modification Phosphothreonine. A phosphoserine mark is found at serine 306, serine 314, and serine 325. Residues 317-332 (QNRMGQAGSTISNSHA) show a composition bias toward polar residues. Residues 317–382 (QNRMGQAGST…SRPRPDDLEI (66 aa)) form a disordered region. Residue threonine 326 is modified to Phosphothreonine. 3 positions are modified to phosphoserine: serine 328, serine 330, and serine 365. Over residues 362-374 (RPSSRASSRASSR) the composition is skewed to low complexity. At serine 368 the chain carries Phosphoserine; by PKC/PRKCG and PKC/PRKCD. Phosphoserine occurs at positions 369 and 373.

The protein belongs to the connexin family. Alpha-type (group II) subfamily. A connexon is composed of a hexamer of connexins. Interacts with SGSM3. Interacts with RIC1/CIP150. Interacts with CNST and CSNK1D. Interacts (via C-terminus) with TJP1. Interacts (via C-terminus) with SRC (via SH3 domain). Interacts (not ubiquitinated) with UBQLN4 (via UBA domain). Interacts with NOV. Interacts with TMEM65. Interacts with ANK3/ANKG and PKP2. Contains at least one intramolecular disulfide bond. Post-translationally, phosphorylation at Ser-325, Ser-328 and Ser-330 by CK1 modulates gap junction assembly. Phosphorylated at Ser-368 by PRKCG; phosphorylation induces disassembly of gap junction plaques and inhibition of gap junction activity. Phosphorylation at Ser-368 by PRKCD triggers its internalization into small vesicles leading to proteasome-mediated degradation. In terms of processing, sumoylated with SUMO1, SUMO2 and SUMO3, which may regulate the level of functional Cx43 gap junctions at the plasma membrane. May be desumoylated by SENP1 or SENP2. S-nitrosylation at Cys-271 is enriched at the muscle endothelial gap junction in arteries, it augments channel permeability and may regulate of smooth muscle cell to endothelial cell communication. Post-translationally, acetylated in the developing cortex; leading to delocalization from the cell membrane. In terms of tissue distribution, detected in ventricle and atrium (at protein level).

It is found in the cell membrane. The protein localises to the cell junction. Its subcellular location is the gap junction. The protein resides in the endoplasmic reticulum. In terms of biological role, gap junction protein that acts as a regulator of bladder capacity. A gap junction consists of a cluster of closely packed pairs of transmembrane channels, the connexons, through which materials of low MW diffuse from one cell to a neighboring cell. Negative regulator of bladder functional capacity: acts by enhancing intercellular electrical and chemical transmission, thus sensitizing bladder muscles to cholinergic neural stimuli and causing them to contract. May play a role in cell growth inhibition through the regulation of NOV expression and localization. Plays an essential role in gap junction communication in the ventricles. The sequence is that of Gap junction alpha-1 protein (Gja1) from Rattus norvegicus (Rat).